Reading from the N-terminus, the 98-residue chain is NADH-ubiquinone oxidoreductase chain 4L (98 aa).

The next 3 helical transmembrane spans lie at methionine 1–methionine 21, serine 29–leucine 49, and isoleucine 61–isoleucine 81.

It belongs to the complex I subunit 4L family. As to quaternary structure, core subunit of respiratory chain NADH dehydrogenase (Complex I) which is composed of 45 different subunits.

The protein resides in the mitochondrion inner membrane. The enzyme catalyses a ubiquinone + NADH + 5 H(+)(in) = a ubiquinol + NAD(+) + 4 H(+)(out). In terms of biological role, core subunit of the mitochondrial membrane respiratory chain NADH dehydrogenase (Complex I) which catalyzes electron transfer from NADH through the respiratory chain, using ubiquinone as an electron acceptor. Part of the enzyme membrane arm which is embedded in the lipid bilayer and involved in proton translocation. In Vicugna pacos (Alpaca), this protein is NADH-ubiquinone oxidoreductase chain 4L (MT-ND4L).